The following is a 315-amino-acid chain: Probable carboxylesterase 3 (315 aa).

The residue at position 1 (methionine 1) is an N-acetylmethionine. The Involved in the stabilization of the negatively charged intermediate by the formation of the oxyanion hole motif lies at histidine 81–glycine 83. Residues serine 160, aspartate 258, and histidine 290 contribute to the active site.

It belongs to the 'GDXG' lipolytic enzyme family. In terms of tissue distribution, expressed in flowers and siliques.

It catalyses the reaction a carboxylic ester + H2O = an alcohol + a carboxylate + H(+). In terms of biological role, carboxylesterase acting on esters with varying acyl chain length. This Arabidopsis thaliana (Mouse-ear cress) protein is Probable carboxylesterase 3 (CXE3).